Reading from the N-terminus, the 818-residue chain is Rho GTPase-activating protein 44 (818 aa).

The 236-residue stretch at 14-249 (QTVGRAEKTE…IKAQQEAWVE (236 aa)) folds into the BAR domain. The region spanning 255 to 445 (KPLEEHLTIS…PIIQHADWFF (191 aa)) is the Rho-GAP domain. Disordered stretches follow at residues 467–493 (ANYS…RPLS), 530–772 (SSAG…SMST), and 789–818 (TLRL…STAL). Residues 479–489 (PADRRQPEQAR) are compositionally biased toward basic and acidic residues. Serine 493 carries the post-translational modification Phosphoserine. The segment covering 563–579 (QPLDSPAAPALSPSGLG) has biased composition (low complexity). Residues 598–611 (GSAQKGSPGSSQGT) show a composition bias toward polar residues. Composition is skewed to low complexity over residues 614 to 641 (AGTQ…DQSP) and 688 to 708 (SPYG…LSPA). Positions 731 to 818 (KPRQRPTLPP…SEEESESTAL (88 aa)) are interaction with BST2. Residues 746-757 (VNLSASSPQSTE) show a composition bias toward polar residues. The short motif at 764–767 (MSPG) is the PDZ-binding element. Positions 794 to 809 (PLEHMRRHSVTDKRDS) are enriched in basic and acidic residues. Position 809 is a phosphoserine (serine 809). The short motif at 815–818 (STAL) is the PDZ-binding element.

In terms of assembly, interacts with BST2 (via cytoplasmic domain). Interacts (probably via PDZ-binding motif) with SHANK3 (via PDZ domain); the interaction takes place in dendritic spines and promotes GRIA1 exocytosis. In terms of tissue distribution, highly expressed in brain. Expressed at weak level in other tissues.

The protein resides in the cell projection. It is found in the dendritic spine. The protein localises to the recycling endosome. It localises to the presynapse. Its subcellular location is the dendrite. Functionally, GTPase-activating protein (GAP) that stimulates the GTPase activity of Rho-type GTPases. Thereby, controls Rho-type GTPases cycling between their active GTP-bound and inactive GDP-bound states. Acts as a GAP at least for CDC42 and RAC1. In neurons, is involved in dendritic spine formation and synaptic plasticity in a specific RAC1-GAP activity. Limits the initiation of exploratory dendritic filopodia. Recruited to actin-patches that seed filopodia, binds specifically to plasma membrane sections that are deformed inward by acto-myosin mediated contractile forces. Acts through GAP activity on RAC1 to reduce actin polymerization necessary for filopodia formation. In association with SHANK3, promotes GRIA1 exocytosis from recycling endosomes and spine morphological changes associated to long-term potentiation. This is Rho GTPase-activating protein 44 from Homo sapiens (Human).